The sequence spans 591 residues: L-fucose isomerase (591 aa).

Active-site proton acceptor residues include glutamate 337 and aspartate 361. Mn(2+) contacts are provided by glutamate 337, aspartate 361, and histidine 528.

Belongs to the L-fucose isomerase family. Homohexamer. Requires Mn(2+) as cofactor.

The protein localises to the cytoplasm. The enzyme catalyses L-fucose = L-fuculose. Its pathway is carbohydrate degradation; L-fucose degradation; L-lactaldehyde and glycerone phosphate from L-fucose: step 1/3. Its function is as follows. Converts the aldose L-fucose into the corresponding ketose L-fuculose. This chain is L-fucose isomerase, found in Klebsiella pneumoniae (strain 342).